Here is a 614-residue protein sequence, read N- to C-terminus: DNA double-strand break repair protein Mre11 (614 aa).

Residues Asp12, His14, Asp53, and Asn88 each coordinate Mn(2+). His89 (proton donor) is an active-site residue. His158, Asp189, and His191 together coordinate Mn(2+). Disordered regions lie at residues 393-434 (ASPI…SPDI) and 487-614 (ALKK…GDYL). Residues 411–425 (PVSSADSVSAVSPES) show a composition bias toward low complexity. Composition is skewed to basic and acidic residues over residues 487 to 502 (ALKKSYEAPDKVREAP), 535 to 558 (VPEKGGERTELEDDAVNKTEKETG), and 568 to 591 (GSEKEDADRIEKPAHVPDKAEKPV).

The protein belongs to the MRE11/RAD32 family. As to quaternary structure, homodimer. Forms a heterotetramer composed of two Mre11 subunits and two Rad50 subunits. The cofactor is Mn(2+).

With respect to regulation, nuclease activity is regulated by Rad50. Part of the Rad50/Mre11 complex, which is involved in the early steps of DNA double-strand break (DSB) repair. The complex may facilitate opening of the processed DNA ends to aid in the recruitment of HerA and NurA. Mre11 binds to DSB ends and has both double-stranded 3'-5' exonuclease activity and single-stranded endonuclease activity. The protein is DNA double-strand break repair protein Mre11 of Methanosarcina acetivorans (strain ATCC 35395 / DSM 2834 / JCM 12185 / C2A).